The following is a 243-amino-acid chain: Leucyl/phenylalanyl-tRNA--protein transferase (243 aa).

The interval 1 to 22 is disordered; the sequence is MHSQPYLLSPTPNTPFPPAEHA.

Belongs to the L/F-transferase family.

It is found in the cytoplasm. It catalyses the reaction N-terminal L-lysyl-[protein] + L-leucyl-tRNA(Leu) = N-terminal L-leucyl-L-lysyl-[protein] + tRNA(Leu) + H(+). The catalysed reaction is N-terminal L-arginyl-[protein] + L-leucyl-tRNA(Leu) = N-terminal L-leucyl-L-arginyl-[protein] + tRNA(Leu) + H(+). The enzyme catalyses L-phenylalanyl-tRNA(Phe) + an N-terminal L-alpha-aminoacyl-[protein] = an N-terminal L-phenylalanyl-L-alpha-aminoacyl-[protein] + tRNA(Phe). Its function is as follows. Functions in the N-end rule pathway of protein degradation where it conjugates Leu, Phe and, less efficiently, Met from aminoacyl-tRNAs to the N-termini of proteins containing an N-terminal arginine or lysine. The polypeptide is Leucyl/phenylalanyl-tRNA--protein transferase (Xylella fastidiosa (strain M23)).